A 146-amino-acid polypeptide reads, in one-letter code: Chorion class A protein Ld3/Ld29 (146 aa).

Positions 1 to 21 (MNTFALLSVFIQACLVQSVFS) are cleaved as a signal peptide.

It belongs to the chorion protein family.

This protein is one of many from the eggshell of the gypsy moth. In Lymantria dispar (Gypsy moth), this protein is Chorion class A protein Ld3/Ld29.